A 476-amino-acid chain; its full sequence is Doublesex and mab-3 related transcription factor 3 (476 aa).

The segment at residues 29-76 (CARCRNHGVLSWLKGHKRYCRFKDCTCEKCILIIERQRVMAAQVALRR) is a DNA-binding region (DM). Disordered stretches follow at residues 89–130 (DSLR…RPAT) and 147–195 (GTLP…SKNC). Low complexity predominate over residues 102–121 (DAAATAATASQSSPASQASQ). Residues 176-185 (FSDKDTDQRS) are compositionally biased toward basic and acidic residues. One can recognise a DMA domain in the interval 255-290 (RPPLEVLKKIFPNQKPTVLELILKGCGGDLVSAVEV). The span at 418–432 (NSTSVFRSSPVLSSR) shows a compositional bias: polar residues. The tract at residues 418–476 (NSTSVFRSSPVLSSRTTEDPRISIPDDGCPIVAKQSIYTEDDYDERSDSSDSRILNTSS) is disordered.

This sequence belongs to the DMRT family.

Its subcellular location is the nucleus. Probable transcription factor that plays a role in configuring the spinal circuits controlling stride in vertebrates. Involved in neuronal specification within a specific subdivision of spinal cord neurons and in the development of a coordinated locomotor network controlling limb movements. May regulate transcription during sexual development. This Rattus norvegicus (Rat) protein is Doublesex and mab-3 related transcription factor 3 (Dmrt3).